The sequence spans 308 residues: MAVLLLGEVTNGALNRDATAKAVAAVKALGDVTVLCAGASAKAAAEEAAKIAGVAKVLVAEDALYGHRLAEPTAALIVGLAGDYSHIAAPATTDAKNVMPRVAALLDVMVLSDVSAILDADTFERPIYAGNAIQVVKSKDAKKVFTIRTASFDAAGEGGTAPVTETAAAADPGLSSWVADEVAESDRPELTSARRVVSGGRGLGSKESFAIIEELADKLGAAVGASRAAVDSGYAPNDWQVGQTGKVVAPELYVAVGISGAIQHLAGMKDSKVIVAINKDEEAPIFQIADYGLVGDLFSVVPELTGKL.

252-280 (LYVAVGISGAIQHLAGMKDSKVIVAINKD) contributes to the FAD binding site.

The protein belongs to the ETF alpha-subunit/FixB family. Heterodimer of an alpha and a beta subunit. The cofactor is FAD.

The electron transfer flavoprotein serves as a specific electron acceptor for other dehydrogenases. It transfers the electrons to the main respiratory chain via ETF-ubiquinone oxidoreductase (ETF dehydrogenase). The protein is Electron transfer flavoprotein subunit alpha (etfA) of Paracoccus denitrificans.